Consider the following 591-residue polypeptide: L-fucose isomerase (591 aa).

Residues E337 and D361 each act as proton acceptor in the active site. Positions 337, 361, and 528 each coordinate Mn(2+).

The protein belongs to the L-fucose isomerase family. Homohexamer. Mn(2+) serves as cofactor.

Its subcellular location is the cytoplasm. The catalysed reaction is L-fucose = L-fuculose. The protein operates within carbohydrate degradation; L-fucose degradation; L-lactaldehyde and glycerone phosphate from L-fucose: step 1/3. Functionally, converts the aldose L-fucose into the corresponding ketose L-fuculose. In Escherichia coli (strain ATCC 8739 / DSM 1576 / NBRC 3972 / NCIMB 8545 / WDCM 00012 / Crooks), this protein is L-fucose isomerase.